A 123-amino-acid chain; its full sequence is Small ribosomal subunit protein cS23 (123 aa).

Belongs to the chloroplast-specific ribosomal protein cS23 family. Part of the 30S ribosomal subunit.

It localises to the plastid. Its subcellular location is the chloroplast. Its function is as follows. Probably a ribosomal protein or a ribosome-associated protein. This chain is Small ribosomal subunit protein cS23 (ycf65), found in Mesostigma viride (Green alga).